The following is a 176-amino-acid chain: NADH-quinone oxidoreductase subunit B 1 (176 aa).

[4Fe-4S] cluster is bound by residues cysteine 55, cysteine 56, cysteine 120, and cysteine 150.

This sequence belongs to the complex I 20 kDa subunit family. As to quaternary structure, NDH-1 is composed of 14 different subunits. Subunits NuoB, C, D, E, F, and G constitute the peripheral sector of the complex. The cofactor is [4Fe-4S] cluster.

The protein localises to the cell inner membrane. It catalyses the reaction a quinone + NADH + 5 H(+)(in) = a quinol + NAD(+) + 4 H(+)(out). NDH-1 shuttles electrons from NADH, via FMN and iron-sulfur (Fe-S) centers, to quinones in the respiratory chain. Couples the redox reaction to proton translocation (for every two electrons transferred, four hydrogen ions are translocated across the cytoplasmic membrane), and thus conserves the redox energy in a proton gradient. In Cereibacter sphaeroides (strain ATCC 17029 / ATH 2.4.9) (Rhodobacter sphaeroides), this protein is NADH-quinone oxidoreductase subunit B 1.